The sequence spans 492 residues: 3,6-anhydro-alpha-L-galactose dehydrogenase (492 aa).

NADP(+) contacts are provided by residues 160-161 (WN), 184-187 (KPSE), and 237-238 (GS). The active-site Proton acceptor is the Glu259. Leu260 is a binding site for NADP(+). The active-site Nucleophile is Cys293. Position 394 (Glu394) interacts with NADP(+).

The protein belongs to the aldehyde dehydrogenase family.

The enzyme catalyses 3,6-anhydro-alpha-L-galactopyranose + NADP(+) + H2O = 3,6-anhydro-L-galactonate + NADPH + 2 H(+). Its activity is regulated as follows. Significantly inhibited by EDTA. Activity is enhanced by Fe(2+), but is strongly inhibited by Mn(2+), Cu(2+), Zn(2+), Ni(2+) and Co(2+). Its function is as follows. Involved in the degradation of 3,6-anhydro-L-galactose, which is the major monomeric sugar of red macroalgae. Catalyzes the oxidation of 3,6-anhydro-L-galactose (AHG) to form 3,6-anhydrogalactonate (AHGA). Shows broad substrate specificity, with maximum activity toward AHG. The enzyme activities toward D-fructose, D-galactose and D-ribose are between 40% and 50% of the maximum, but those toward L-rhamnose, L-glyceraldehyde, D-glyceraldehyde, L-fucose and D-glucose are much lower. This is 3,6-anhydro-alpha-L-galactose dehydrogenase from Streptomyces coelicolor (strain ATCC BAA-471 / A3(2) / M145).